We begin with the raw amino-acid sequence, 160 residues long: Large ribosomal subunit protein uL22c (160 aa).

It belongs to the universal ribosomal protein uL22 family. As to quaternary structure, part of the 50S ribosomal subunit.

It is found in the plastid. Its subcellular location is the chloroplast. Functionally, this protein binds specifically to 23S rRNA. Its function is as follows. The globular domain of the protein is located near the polypeptide exit tunnel on the outside of the subunit, while an extended beta-hairpin is found that lines the wall of the exit tunnel in the center of the 70S ribosome. In Panax ginseng (Korean ginseng), this protein is Large ribosomal subunit protein uL22c (rpl22).